We begin with the raw amino-acid sequence, 732 residues long: Eukaryotic translation initiation factor 3 subunit B (732 aa).

The interval 1 to 94 (MTTLESLKIE…LFIEMESVSA (94 aa)) is sufficient for interaction with HCR1 and TIF32. Positions 1–219 (MTTLESLKIE…GVTSWGGPNF (219 aa)) are sufficient for interaction with PIC8. In terms of domain architecture, RRM spans 37-120 (NFLVVDGAPV…HRLLVNSLND (84 aa)). WD repeat units lie at residues 185-224 (ARKN…RLKR), 237-280 (PTEK…LMKT), 439-481 (EMKD…KFFA), and 507-554 (VDQQ…KTLN).

The protein belongs to the eIF-3 subunit B family. Component of the eukaryotic translation initiation factor 3 (eIF-3) complex.

It is found in the cytoplasm. RNA-binding component of the eukaryotic translation initiation factor 3 (eIF-3) complex, which is involved in protein synthesis of a specialized repertoire of mRNAs and, together with other initiation factors, stimulates binding of mRNA and methionyl-tRNAi to the 40S ribosome. The eIF-3 complex specifically targets and initiates translation of a subset of mRNAs involved in cell proliferation. In Kluyveromyces lactis (strain ATCC 8585 / CBS 2359 / DSM 70799 / NBRC 1267 / NRRL Y-1140 / WM37) (Yeast), this protein is Eukaryotic translation initiation factor 3 subunit B.